We begin with the raw amino-acid sequence, 100 residues long: uncharacterized protein (100 aa).

2 consecutive transmembrane segments (helical) span residues 30–50 (FHIPDFLSFVFPFVASPPLAF) and 69–89 (FLLIVFLFFNLFPTFFFLPFF).

The protein resides in the cytoplasm. Its subcellular location is the nucleus membrane. This is an uncharacterized protein from Schizosaccharomyces pombe (strain 972 / ATCC 24843) (Fission yeast).